A 210-amino-acid chain; its full sequence is Neuroendocrine protein 7B2 (210 aa).

Positions 1–24 are cleaved as a signal peptide; the sequence is MTSRMAILSGLLFWLLLEWNPAFA. Cys118 and Cys128 are disulfide-bonded. A phosphoserine mark is found at Ser139 and Ser203.

It belongs to the 7B2 family. In terms of assembly, interacts with PCSK2/PC2 early in the secretory pathway. Dissociation occurs at later stages. In terms of processing, proteolytically cleaved in the Golgi by a furin-like convertase to generate bioactive peptides. Sulfated on tyrosine residues.

It localises to the secreted. Acts as a molecular chaperone for PCSK2/PC2, preventing its premature activation in the regulated secretory pathway. Binds to inactive PCSK2 in the endoplasmic reticulum and facilitates its transport from there to later compartments of the secretory pathway where it is proteolytically matured and activated. Also required for cleavage of PCSK2 but does not appear to be involved in its folding. Plays a role in regulating pituitary hormone secretion. The C-terminal peptide inhibits PCSK2 in vitro. In Rattus norvegicus (Rat), this protein is Neuroendocrine protein 7B2 (Scg5).